Here is a 203-residue protein sequence, read N- to C-terminus: Protein Nef (203 aa).

The segment at 1–25 (MGNKWSKSWPQVRERMRRAPAPAAD) is disordered. Gly2 is lipidated: N-myristoyl glycine; by host. A Phosphoserine; by host modification is found at Ser6. The acidic; interacts with host PACS1 and PACS2; stabilizes the interaction of NEF/MHC-I with host AP1M1; necessary for MHC-I internalization stretch occupies residues 59–62 (TEEE). Residues 66-75 (PVKPQIPLRP) are SH3-binding; interaction with Src family tyrosine kinases. Residues 69 to 72 (PQIP) carry the PxxP; stabilizes the interaction of NEF/MHC-I with host AP1M1; necessary for MHC-I internalization motif. A mediates dimerization, Nef-PTE1 interaction region spans residues 105 to 121 (EILDLWVHNTQGYFPDW). The tract at residues 145–177 (VDPSEVEEANEGENNCLLHPICQHGIEDEEREV) is binding to ATP6V1H. The short motif at 161–162 (LL) is the Dileucine internalization motif; necessary for CD4 internalization element. A Diacidic; necessary for CD4 internalization motif is present at residues 171-172 (ED).

Belongs to the lentivirus primate group Nef protein family. In terms of assembly, monomer; cytosolic form. Homodimer; membrane bound form. Interacts with Nef associated p21-activated kinase (PAK2); this interaction activates PAK2. Associates with the Nef-MHC-I-AP1 complex; this complex is required for MHC-I internalization. Interacts (via C-terminus) with host PI3-kinase. Interacts with host PACS1; this interaction seems to be weak. Interacts with host PACS2. Interacts with host LCK and MAPK3; these interactions inhibit the kinase activity of the latter. Interacts with host ATP6V1H; this interaction may play a role in CD4 endocytosis. Associates with the CD4-Nef-AP2 complex; this complex is required for CD4 internalization. Interacts with host AP2 subunit alpha and AP2 subunit sigma2. Interacts with TCR-zeta chain; this interaction up-regulates the Fas ligand (FasL) surface expression. Interacts with host HCK, LYN, and SRC; these interactions activate the Src family kinases. Interacts with MAP3K5; this interaction inhibits the Fas and TNFR-mediated death signals. Interacts with beta-COP and PTE1. Interacts with human RACK1; this increases Nef phosphorylation by PKC. Interacts with TP53; this interaction decreases the half-life of TP53, protecting the infected cell against p53-mediated apoptosis. Post-translationally, the virion-associated Nef proteins are cleaved by the viral protease to release the soluble C-terminal core protein. Nef is probably cleaved concomitantly with viral structural proteins on maturation of virus particles. In terms of processing, myristoylated. Phosphorylated on serine residues, probably by host PKCdelta and theta.

It localises to the host cell membrane. The protein resides in the virion. The protein localises to the secreted. It is found in the host Golgi apparatus membrane. Factor of infectivity and pathogenicity, required for optimal virus replication. Alters numerous pathways of T-lymphocyte function and down-regulates immunity surface molecules in order to evade host defense and increase viral infectivity. Alters the functionality of other immunity cells, like dendritic cells, monocytes/macrophages and NK cells. In terms of biological role, in infected CD4(+) T-lymphocytes, down-regulates the surface MHC-I, mature MHC-II, CD4, CD28, CCR5 and CXCR4 molecules. Mediates internalization and degradation of host CD4 through the interaction of with the cytoplasmic tail of CD4, the recruitment of AP-2 (clathrin adapter protein complex 2), internalization through clathrin coated pits, and subsequent transport to endosomes and lysosomes for degradation. Diverts host MHC-I molecules to the trans-Golgi network-associated endosomal compartments by an endocytic pathway to finally target them for degradation. MHC-I down-regulation may involve AP-1 (clathrin adapter protein complex 1) or possibly Src family kinase-ZAP70/Syk-PI3K cascade recruited by PACS2. In consequence infected cells are masked for immune recognition by cytotoxic T-lymphocytes. Decreasing the number of immune receptors also prevents reinfection by more HIV particles (superinfection). Down-regulates host SERINC3 and SERINC5 thereby excluding these proteins from the viral particles. Virion infectivity is drastically higher when SERINC3 or SERINC5 are excluded from the viral envelope, because these host antiviral proteins impair the membrane fusion event necessary for subsequent virion penetration. Its function is as follows. Bypasses host T-cell signaling by inducing a transcriptional program nearly identical to that of anti-CD3 cell activation. Interaction with TCR-zeta chain up-regulates the Fas ligand (FasL). Increasing surface FasL molecules and decreasing surface MHC-I molecules on infected CD4(+) cells send attacking cytotoxic CD8+ T-lymphocytes into apoptosis. Functionally, plays a role in optimizing the host cell environment for viral replication without causing cell death by apoptosis. Protects the infected cells from apoptosis in order to keep them alive until the next virus generation is ready to strike. Inhibits the Fas and TNFR-mediated death signals by blocking MAP3K5/ASK1. Decreases the half-life of TP53, protecting the infected cell against p53-mediated apoptosis. Inhibits the apoptotic signals regulated by the Bcl-2 family proteins through the formation of a Nef/PI3-kinase/PAK2 complex that leads to activation of PAK2 and induces phosphorylation of host BAD. Extracellular Nef protein targets CD4(+) T-lymphocytes for apoptosis by interacting with CXCR4 surface receptors. In Human immunodeficiency virus type 1 group M subtype J (isolate SE9280) (HIV-1), this protein is Protein Nef.